The primary structure comprises 243 residues: Secreted RxLR effector protein 28 (243 aa).

Residues 1 to 26 (MHVSRIIAHIALATAITATTVSPTDA) form the signal peptide. The RxLR signature appears at 49–52 (RGLR). The tract at residues 187-243 (NVDEDKGQNFGHSVSGPPTTTLTGPHTKSGIPPFENLVAPAKGSMPNTRRNGYQFFE) is disordered. Residues 199-216 (SVSGPPTTTLTGPHTKSG) show a composition bias toward low complexity.

It belongs to the RxLR effector family.

It is found in the secreted. It localises to the host cytoplasm. Its subcellular location is the host nucleus. Functionally, effector that significantly enhances susceptibilities of grapevine and tobacco to pathogens. Acts as a broad suppressor of cell death to interrupt plant immunity. Completely inhibits cell death induced by cell death-inducing proteins, including the PAMP elicitor INF1 from P.infestans. Reduces the transcriptional levels of the defense-related genes and impairs the H(2)O(2) accumulation in N.benthamiana. This chain is Secreted RxLR effector protein 28, found in Plasmopara viticola (Downy mildew of grapevine).